A 324-amino-acid polypeptide reads, in one-letter code: Protoheme IX farnesyltransferase (324 aa).

9 helical membrane passes run 31 to 51 (LIVL…RGEV), 53 to 73 (PVLA…ANTI), 104 to 124 (LVFA…CANL), 125 to 145 (LSAC…THWL), 153 to 173 (IVIG…AVTG), 181 to 201 (VLFA…AMLI), 222 to 242 (TAWQ…LLVY), 243 to 263 (PLHA…VVFI), and 285 to 305 (FSIL…LPLT).

This sequence belongs to the UbiA prenyltransferase family. Protoheme IX farnesyltransferase subfamily.

It is found in the cell inner membrane. It catalyses the reaction heme b + (2E,6E)-farnesyl diphosphate + H2O = Fe(II)-heme o + diphosphate. It participates in porphyrin-containing compound metabolism; heme O biosynthesis; heme O from protoheme: step 1/1. In terms of biological role, converts heme B (protoheme IX) to heme O by substitution of the vinyl group on carbon 2 of heme B porphyrin ring with a hydroxyethyl farnesyl side group. The chain is Protoheme IX farnesyltransferase from Cyanothece sp. (strain PCC 7425 / ATCC 29141).